Consider the following 203-residue polypeptide: A-type ATP synthase subunit E (203 aa).

The protein belongs to the V-ATPase E subunit family. In terms of assembly, has multiple subunits with at least A(3), B(3), C, D, E, F, H, I and proteolipid K(x).

The protein resides in the cell membrane. Component of the A-type ATP synthase that produces ATP from ADP in the presence of a proton gradient across the membrane. The sequence is that of A-type ATP synthase subunit E from Desulfurococcus sp. (strain SY).